The following is a 199-amino-acid chain: Small ribosomal subunit protein uS5 (199 aa).

A disordered region spans residues M1–D28. In terms of domain architecture, S5 DRBM spans F31–V94.

It belongs to the universal ribosomal protein uS5 family. Part of the 30S ribosomal subunit. Contacts proteins S4 and S8.

In terms of biological role, with S4 and S12 plays an important role in translational accuracy. Located at the back of the 30S subunit body where it stabilizes the conformation of the head with respect to the body. The chain is Small ribosomal subunit protein uS5 from Rhodospirillum rubrum (strain ATCC 11170 / ATH 1.1.1 / DSM 467 / LMG 4362 / NCIMB 8255 / S1).